The chain runs to 316 residues: Ribosomal RNA small subunit methyltransferase H (316 aa).

S-adenosyl-L-methionine contacts are provided by residues Ala-35 to His-37, Asp-55, Phe-84, Asp-105, and Gln-112.

This sequence belongs to the methyltransferase superfamily. RsmH family.

It is found in the cytoplasm. The catalysed reaction is cytidine(1402) in 16S rRNA + S-adenosyl-L-methionine = N(4)-methylcytidine(1402) in 16S rRNA + S-adenosyl-L-homocysteine + H(+). In terms of biological role, specifically methylates the N4 position of cytidine in position 1402 (C1402) of 16S rRNA. The chain is Ribosomal RNA small subunit methyltransferase H from Streptococcus suis (strain 05ZYH33).